Here is a 337-residue protein sequence, read N- to C-terminus: Vacuolar protein sorting-associated protein 26B-A (337 aa).

The segment at 313 to 337 (RFEGTSHPETRPQHSGAAAVEQEHE) is disordered.

This sequence belongs to the VPS26 family. As to quaternary structure, component of the heterotrimeric retromer cargo-selective complex (CSC) which is believed to associate with variable sorting nexins to form functionally distinct retromer complex variants.

Its subcellular location is the cytoplasm. The protein localises to the endosome membrane. It is found in the early endosome. Functionally, acts as a component of the retromer cargo-selective complex (CSC). The CSC is believed to be the core functional component of retromer or respective retromer complex variants acting to prevent missorting of selected transmembrane cargo proteins into the lysosomal degradation pathway. Retromer mediates retrograde transport of cargo proteins from endosomes to the trans-Golgi network (TGN). The protein is Vacuolar protein sorting-associated protein 26B-A (vps26b-a) of Xenopus laevis (African clawed frog).